Here is a 206-residue protein sequence, read N- to C-terminus: Small ribosomal subunit protein uS4 (206 aa).

The region spanning 96 to 157 is the S4 RNA-binding domain; sequence SRLDNVVYRM…KAKKQVRIQE (62 aa).

This sequence belongs to the universal ribosomal protein uS4 family. As to quaternary structure, part of the 30S ribosomal subunit. Contacts protein S5. The interaction surface between S4 and S5 is involved in control of translational fidelity.

Its function is as follows. One of the primary rRNA binding proteins, it binds directly to 16S rRNA where it nucleates assembly of the body of the 30S subunit. Functionally, with S5 and S12 plays an important role in translational accuracy. This chain is Small ribosomal subunit protein uS4, found in Neisseria gonorrhoeae (strain ATCC 700825 / FA 1090).